We begin with the raw amino-acid sequence, 111 residues long: Small ribosomal subunit protein uS10 (111 aa).

It belongs to the universal ribosomal protein uS10 family. As to quaternary structure, part of the 30S ribosomal subunit.

Its function is as follows. Involved in the binding of tRNA to the ribosomes. The chain is Small ribosomal subunit protein uS10 from Ehrlichia ruminantium (strain Welgevonden).